A 533-amino-acid polypeptide reads, in one-letter code: Di/tripeptide-binding protein 4 (533 aa).

An N-terminal signal peptide occupies residues 1–25 (MLHPLLRHLPLALALALCAAGAAQA).

It belongs to the bacterial solute-binding protein 5 family. As to quaternary structure, the complex is composed of two ATP-binding proteins (DppD and DppF), two transmembrane proteins (DppB and DppC) and a solute-binding protein (DppA4). Five orthologous SBPs (DppA1-A5) are present in P.aeruginosa, which increases the substrate specificity of the DppBCDF transporter.

Its function is as follows. Part of the ABC transporter DppABCDF involved in the uptake of various di/tripeptides. Prefers dipeptides with acidic residues at the C-terminal end. Efficiently uses tripeptides. This is Di/tripeptide-binding protein 4 from Pseudomonas aeruginosa (strain UCBPP-PA14).